A 254-amino-acid polypeptide reads, in one-letter code: Cytochrome c oxidase subunit 2 (254 aa).

The Mitochondrial intermembrane segment spans residues 12–38 (DAPEPWQICYQDSATKIMSGIDKLTGE). The chain crosses the membrane as a helical span at residues 39–59 (IFYYETLLLIIVGWVLISAII). Topologically, residues 60–73 (KYTKTELSYKYFNH) are mitochondrial matrix. Residues 74 to 94 (GTLIEILWTCSPAFILIAISF) form a helical membrane-spanning segment. Over 95–248 (PSFKLLYLMD…KYLEWLNIHL (154 aa)) the chain is Mitochondrial intermembrane. 6 residues coordinate Cu cation: His182, Cys217, Glu219, Cys221, His225, and Met228. Position 219 (Glu219) interacts with Mg(2+).

The protein belongs to the cytochrome c oxidase subunit 2 family. Component of the cytochrome c oxidase (complex IV, CIV), a multisubunit enzyme composed of a catalytic core of 3 subunits and several supernumerary subunits. The complex exists as a monomer or a dimer and forms supercomplexes (SCs) in the inner mitochondrial membrane with ubiquinol-cytochrome c oxidoreductase (cytochrome b-c1 complex, complex III, CIII). It depends on Cu cation as a cofactor.

It localises to the mitochondrion inner membrane. The enzyme catalyses 4 Fe(II)-[cytochrome c] + O2 + 8 H(+)(in) = 4 Fe(III)-[cytochrome c] + 2 H2O + 4 H(+)(out). Component of the cytochrome c oxidase, the last enzyme in the mitochondrial electron transport chain which drives oxidative phosphorylation. The respiratory chain contains 3 multisubunit complexes succinate dehydrogenase (complex II, CII), ubiquinol-cytochrome c oxidoreductase (cytochrome b-c1 complex, complex III, CIII) and cytochrome c oxidase (complex IV, CIV), that cooperate to transfer electrons derived from NADH and succinate to molecular oxygen, creating an electrochemical gradient over the inner membrane that drives transmembrane transport and the ATP synthase. Cytochrome c oxidase is the component of the respiratory chain that catalyzes the reduction of oxygen to water. Electrons originating from reduced cytochrome c in the intermembrane space (IMS) are transferred via the dinuclear copper A center (CU(A)) of subunit 2 and heme A of subunit 1 to the active site in subunit 1, a binuclear center (BNC) formed by heme A3 and copper B (CU(B)). The BNC reduces molecular oxygen to 2 water molecules using 4 electrons from cytochrome c in the IMS and 4 protons from the mitochondrial matrix. The sequence is that of Cytochrome c oxidase subunit 2 from Zancudomyces culisetae (Gut fungus).